A 528-amino-acid polypeptide reads, in one-letter code: Na(+)/H(+) antiporter NhaB (528 aa).

The next 11 helical transmembrane spans lie at 10 to 30, 63 to 83, 96 to 116, 131 to 165, 204 to 224, 240 to 260, 305 to 325, 359 to 379, 391 to 411, 449 to 469, and 476 to 496; these read IGNF…SFLI, YPLQ…MTSA, VLLL…LLLF, VSLM…FYAI, LLMH…VGEP, FVVR…LTCL, VLVG…VGLV, LAVF…APVI, LVIF…VFVG, ATPN…APLI, and MVWM…LAIE.

This sequence belongs to the NhaB Na(+)/H(+) (TC 2.A.34) antiporter family.

It is found in the cell inner membrane. The catalysed reaction is 2 Na(+)(in) + 3 H(+)(out) = 2 Na(+)(out) + 3 H(+)(in). Na(+)/H(+) antiporter that extrudes sodium in exchange for external protons. This is Na(+)/H(+) antiporter NhaB from Shewanella sp. (strain W3-18-1).